The chain runs to 212 residues: Thiamine-phosphate synthase (212 aa).

4-amino-2-methyl-5-(diphosphooxymethyl)pyrimidine contacts are provided by residues Gln40 to Lys44 and Asn75. Asp76 and Asp95 together coordinate Mg(2+). 4-amino-2-methyl-5-(diphosphooxymethyl)pyrimidine is bound at residue Ser113. Thr139–Ser141 contacts 2-[(2R,5Z)-2-carboxy-4-methylthiazol-5(2H)-ylidene]ethyl phosphate. A 4-amino-2-methyl-5-(diphosphooxymethyl)pyrimidine-binding site is contributed by Lys142. Residues Gly171 and Ile191 to Ser192 each bind 2-[(2R,5Z)-2-carboxy-4-methylthiazol-5(2H)-ylidene]ethyl phosphate.

This sequence belongs to the thiamine-phosphate synthase family. Requires Mg(2+) as cofactor.

The catalysed reaction is 2-[(2R,5Z)-2-carboxy-4-methylthiazol-5(2H)-ylidene]ethyl phosphate + 4-amino-2-methyl-5-(diphosphooxymethyl)pyrimidine + 2 H(+) = thiamine phosphate + CO2 + diphosphate. It catalyses the reaction 2-(2-carboxy-4-methylthiazol-5-yl)ethyl phosphate + 4-amino-2-methyl-5-(diphosphooxymethyl)pyrimidine + 2 H(+) = thiamine phosphate + CO2 + diphosphate. The enzyme catalyses 4-methyl-5-(2-phosphooxyethyl)-thiazole + 4-amino-2-methyl-5-(diphosphooxymethyl)pyrimidine + H(+) = thiamine phosphate + diphosphate. It participates in cofactor biosynthesis; thiamine diphosphate biosynthesis; thiamine phosphate from 4-amino-2-methyl-5-diphosphomethylpyrimidine and 4-methyl-5-(2-phosphoethyl)-thiazole: step 1/1. Condenses 4-methyl-5-(beta-hydroxyethyl)thiazole monophosphate (THZ-P) and 2-methyl-4-amino-5-hydroxymethyl pyrimidine pyrophosphate (HMP-PP) to form thiamine monophosphate (TMP). This Staphylococcus carnosus (strain TM300) protein is Thiamine-phosphate synthase.